The primary structure comprises 272 residues: Dermonecrotic toxin LvSicTox-alphaIC1bi (272 aa).

His-5 is a catalytic residue. Mg(2+) contacts are provided by Glu-25 and Asp-27. The active-site Nucleophile is the His-41. 2 cysteine pairs are disulfide-bonded: Cys-45/Cys-51 and Cys-47/Cys-189. Asp-84 is a binding site for Mg(2+).

It belongs to the arthropod phospholipase D family. Class II subfamily. The cofactor is Mg(2+). Expressed by the venom gland.

The protein localises to the secreted. The enzyme catalyses an N-(acyl)-sphingosylphosphocholine = an N-(acyl)-sphingosyl-1,3-cyclic phosphate + choline. It catalyses the reaction an N-(acyl)-sphingosylphosphoethanolamine = an N-(acyl)-sphingosyl-1,3-cyclic phosphate + ethanolamine. The catalysed reaction is a 1-acyl-sn-glycero-3-phosphocholine = a 1-acyl-sn-glycero-2,3-cyclic phosphate + choline. It carries out the reaction a 1-acyl-sn-glycero-3-phosphoethanolamine = a 1-acyl-sn-glycero-2,3-cyclic phosphate + ethanolamine. Functionally, dermonecrotic toxins cleave the phosphodiester linkage between the phosphate and headgroup of certain phospholipids (sphingolipid and lysolipid substrates), forming an alcohol (often choline) and a cyclic phosphate. This toxin acts on sphingomyelin (SM). It may also act on ceramide phosphoethanolamine (CPE), lysophosphatidylcholine (LPC) and lysophosphatidylethanolamine (LPE), but not on lysophosphatidylserine (LPS), and lysophosphatidylglycerol (LPG). It acts by transphosphatidylation, releasing exclusively cyclic phosphate products as second products. Induces dermonecrosis, hemolysis, increased vascular permeability, edema, inflammatory response, and platelet aggregation. This chain is Dermonecrotic toxin LvSicTox-alphaIC1bi, found in Loxosceles variegata (Recluse spider).